The following is a 664-amino-acid chain: Glycine--tRNA ligase beta subunit (664 aa).

Belongs to the class-II aminoacyl-tRNA synthetase family. In terms of assembly, tetramer of two alpha and two beta subunits.

It localises to the cytoplasm. It carries out the reaction tRNA(Gly) + glycine + ATP = glycyl-tRNA(Gly) + AMP + diphosphate. The sequence is that of Glycine--tRNA ligase beta subunit from Rickettsia felis (strain ATCC VR-1525 / URRWXCal2) (Rickettsia azadi).